A 921-amino-acid polypeptide reads, in one-letter code: MATPSAAFEALMNGVTSWNVPEDAVPCELLLIGEASFPVMVNDMGQVLIAASSYGRGRLVVVSHEDYLVEAQLTPFLLNAVGWLCSSPGAPVGVHPSLAPLAKILEGSGVEAKVEPEVKDSLGVYCIDAYNETMTEKLVKFMKRGGGLLIGGQAWDWANQGDDERVLFTFPGNLVTSVAGVYFTDNKGDTSFFKVSKKMPKIPVLVSCEDDLSEDRDELLHGISELDITNSDCFPSQLLVHGALAFPLGLDSYHGCVIAAARYGRGRVVVTGHKVLFTVGKLGPFLLNAVRWLDAGRRGKIVVQTELRTLSGLLAVGGIDTSIEPNLTSDASVYCFEPVSDVGVKELQEFVAEGGGLFVGAQAWWWAFKNPGVSPLARFPGNLLLNPFGISITSQSLNPGPFRTPKAGIRTYHFRSTLAEFQVIMGRKRGNVEKGWLAKLGPDGAAFLQIPAEEIPAYMSVHRLLRKLLSRYRLPVATRENPVINDCCRGAMLSLATGLAHSGSDLSLLVPEIEDMYSSPYLRPSESPITVEVNCNNPGTRYCWMSTGLYIPGRQIIEVSLPEAAASADLKIQIGCHTDDLTRASKLFRGPLVINRCCLDKPTKSITCLWGGLLYIIVPQSSKLGTVPVTIKGAVRAPYYKLGETTQEEWKRQIQENPGPWGELATDNIILTVPTANLRTLENPEPLLRLWDEVMQAVARLGAEPFPLRLPQRIVADVQISVGWMHAGYPIMCHLESVQELINEKLIRTKGLWGPVHELGRNQQRQEWEFPPHTTEATCNLWCVYVHETVLGIPRGRANIALWPPVREKRVRIYLGKGPNVKNWNAWTALETYLQLQEAFGWEPFIRLFTEYRNQTNLPTDNVDKMNLWVKMFSHQVQKNLAPFFEAWAWPIQKEVATSLAYLPEWEENIMKLYLLTQMPH.

The region spanning 542–841 is the Peptidase M60 domain; the sequence is YCWMSTGLYI…TYLQLQEAFG (300 aa).

It belongs to the TCAF family. In terms of assembly, interacts with TRPM8 (via N-terminus and C-terminus domains); the interaction inhibits TRPM8 channel activity. Interacts with TRPV6.

The protein resides in the cell membrane. Functionally, positively regulates the plasma membrane cation channel TRPM8 activity. Involved in the recruitment of TRPM8 to the cell surface. Promotes prostate cancer cell migration inhibition in a TRPM8-dependent manner. The protein is TRPM8 channel-associated factor 1 of Bos taurus (Bovine).